The primary structure comprises 1184 residues: DNA-directed RNA polymerase subunit beta' (1184 aa).

Zn(2+)-binding residues include Cys-60, Cys-62, Cys-75, and Cys-78. Asp-449, Asp-451, and Asp-453 together coordinate Mg(2+). Residues Cys-794, Cys-867, Cys-874, and Cys-877 each contribute to the Zn(2+) site. Positions 1165 to 1184 (NDQQERQDKEKEETEVKASN) are disordered.

It belongs to the RNA polymerase beta' chain family. The RNAP catalytic core consists of 2 alpha, 1 beta, 1 beta' and 1 omega subunit. When a sigma factor is associated with the core the holoenzyme is formed, which can initiate transcription. Requires Mg(2+) as cofactor. The cofactor is Zn(2+).

It carries out the reaction RNA(n) + a ribonucleoside 5'-triphosphate = RNA(n+1) + diphosphate. DNA-dependent RNA polymerase catalyzes the transcription of DNA into RNA using the four ribonucleoside triphosphates as substrates. This is DNA-directed RNA polymerase subunit beta' from Thermoanaerobacter pseudethanolicus (strain ATCC 33223 / 39E) (Clostridium thermohydrosulfuricum).